The sequence spans 348 residues: Phosphate acyltransferase (348 aa).

It belongs to the PlsX family. Homodimer. Probably interacts with PlsY.

Its subcellular location is the cytoplasm. The catalysed reaction is a fatty acyl-[ACP] + phosphate = an acyl phosphate + holo-[ACP]. The protein operates within lipid metabolism; phospholipid metabolism. Functionally, catalyzes the reversible formation of acyl-phosphate (acyl-PO(4)) from acyl-[acyl-carrier-protein] (acyl-ACP). This enzyme utilizes acyl-ACP as fatty acyl donor, but not acyl-CoA. In Pectobacterium carotovorum subsp. carotovorum (strain PC1), this protein is Phosphate acyltransferase.